A 49-amino-acid polypeptide reads, in one-letter code: Large ribosomal subunit protein bL33A (49 aa).

The protein belongs to the bacterial ribosomal protein bL33 family.

The polypeptide is Large ribosomal subunit protein bL33A (Geobacillus kaustophilus (strain HTA426)).